We begin with the raw amino-acid sequence, 729 residues long: DNA topoisomerase 3 (729 aa).

Residues 3–136 (KSVVIAEKPS…IKRLWISSVT (134 aa)) enclose the Toprim domain. Mg(2+) is bound by residues E9 and D105. One can recognise a Topo IA-type catalytic domain in the interval 153–594 (YDNLYASAVA…EMKNYTKEIV (442 aa)). The interval 187-192 (NCGRVQ) is interaction with DNA. The active-site O-(5'-phospho-DNA)-tyrosine intermediate is the Y310. Over residues 686-713 (ERRKKESGNKADKRDVQKYMKQQKKEEE) the composition is skewed to basic and acidic residues. Residues 686-718 (ERRKKESGNKADKRDVQKYMKQQKKEEEPLNNP) form a disordered region.

The protein belongs to the type IA topoisomerase family. Mg(2+) serves as cofactor.

The catalysed reaction is ATP-independent breakage of single-stranded DNA, followed by passage and rejoining.. Functionally, releases the supercoiling and torsional tension of DNA, which is introduced during the DNA replication and transcription, by transiently cleaving and rejoining one strand of the DNA duplex. Introduces a single-strand break via transesterification at a target site in duplex DNA. The scissile phosphodiester is attacked by the catalytic tyrosine of the enzyme, resulting in the formation of a DNA-(5'-phosphotyrosyl)-enzyme intermediate and the expulsion of a 3'-OH DNA strand. The free DNA strand then undergoes passage around the unbroken strand, thus removing DNA supercoils. Finally, in the religation step, the DNA 3'-OH attacks the covalent intermediate to expel the active-site tyrosine and restore the DNA phosphodiester backbone. The sequence is that of DNA topoisomerase 3 from Bacillus cereus (strain ATCC 10987 / NRS 248).